The chain runs to 505 residues: Glycerol kinase (505 aa).

An ADP-binding site is contributed by Thr13. Thr13, Thr14, and Ser15 together coordinate ATP. Thr13 provides a ligand contact to sn-glycerol 3-phosphate. Residue Arg17 coordinates ADP. Arg83, Glu84, Tyr135, and Asp247 together coordinate sn-glycerol 3-phosphate. Residues Arg83, Glu84, Tyr135, Asp247, and Gln248 each coordinate glycerol. 2 residues coordinate ADP: Thr269 and Gly313. ATP-binding residues include Thr269, Gly313, Gln317, and Gly414. Gly414 and Asn418 together coordinate ADP.

Belongs to the FGGY kinase family.

The enzyme catalyses glycerol + ATP = sn-glycerol 3-phosphate + ADP + H(+). It functions in the pathway polyol metabolism; glycerol degradation via glycerol kinase pathway; sn-glycerol 3-phosphate from glycerol: step 1/1. Inhibited by fructose 1,6-bisphosphate (FBP). Key enzyme in the regulation of glycerol uptake and metabolism. Catalyzes the phosphorylation of glycerol to yield sn-glycerol 3-phosphate. The sequence is that of Glycerol kinase from Clavibacter michiganensis subsp. michiganensis (strain NCPPB 382).